The primary structure comprises 396 residues: tRNA-specific 2-thiouridylase MnmA (396 aa).

ATP is bound by residues 35 to 42 (GLSGGVDS) and leucine 61. The active-site Nucleophile is cysteine 122. Cysteine 122 and cysteine 221 form a disulfide bridge. An ATP-binding site is contributed by glycine 147. The tract at residues 171–173 (KDQ) is interaction with tRNA. The Cysteine persulfide intermediate role is filled by cysteine 221. The interval 326-327 (RY) is interaction with tRNA.

The protein belongs to the MnmA/TRMU family.

It is found in the cytoplasm. The catalysed reaction is S-sulfanyl-L-cysteinyl-[protein] + uridine(34) in tRNA + AH2 + ATP = 2-thiouridine(34) in tRNA + L-cysteinyl-[protein] + A + AMP + diphosphate + H(+). Catalyzes the 2-thiolation of uridine at the wobble position (U34) of tRNA, leading to the formation of s(2)U34. The sequence is that of tRNA-specific 2-thiouridylase MnmA from Parasynechococcus marenigrum (strain WH8102).